We begin with the raw amino-acid sequence, 78 residues long: uncharacterized protein (78 aa).

The interval 1–28 (MGGGNAQKSAMARAKNLEKAKAAGKGSQ) is disordered.

This is an uncharacterized protein from Arabidopsis thaliana (Mouse-ear cress).